Consider the following 134-residue polypeptide: uncharacterized protein (134 aa).

The chain crosses the membrane as a helical span at residues 13 to 35; that stretch reads FFIAFSAYLVVILLMTAVSVYYL.

It is found in the membrane. This is an uncharacterized protein from Archaeoglobus fulgidus (strain ATCC 49558 / DSM 4304 / JCM 9628 / NBRC 100126 / VC-16).